Consider the following 972-residue polypeptide: Mast/stem cell growth factor receptor Kit (972 aa).

Positions 1 to 25 (MRGARRAWDFLFVLQLLLRVQTGSS) are cleaved as a signal peptide. Residues 26 to 520 (QPSVSPEELS…QIHAHTLFTP (495 aa)) are Extracellular-facing. 5 consecutive Ig-like C2-type domains span residues 27–112 (PSVS…VFVR), 121–205 (DPPL…LKVR), 212–308 (PVVA…LEVV), 317–410 (PMMN…VYVN), and 413–507 (PEIL…FNFA). 4 disulfides stabilise this stretch: C58–C97, C136–C186, C151–C183, and C233–C290. N-linked (GlcNAc...) asparagine glycans are attached at residues N94 and N145. Residues N283, N293, N300, N320, N352, N367, N400, N463, and N486 are each glycosylated (N-linked (GlcNAc...) asparagine). The cysteines at positions 428 and 491 are disulfide-linked. Residues 521 to 541 (LLIGFVIAAGMMCIIVMILTY) traverse the membrane as a helical segment. Topologically, residues 542–972 (KYLQKPMYEV…TQPLLVHEDV (431 aa)) are cytoplasmic. Y543, Y549, Y564, and Y566 each carry phosphotyrosine; by autocatalysis. Residue Y564 coordinates Mg(2+). Residues 564–566 (YVY) form an important for interaction with phosphotyrosine-binding proteins region. One can recognise a Protein kinase domain in the interval 585–933 (LSFGKTLGAG…ISESTNHIYS (349 aa)). ATP contacts are provided by residues 592–599 (GAGAFGKV), K619, and 667–673 (EYCCYGD). A phosphotyrosine; by autocatalysis mark is found at Y699, Y717, and Y726. S737 and S742 each carry phosphoserine; by PKC/PRKCA. D788 functions as the Proton acceptor in the catalytic mechanism. R792 serves as a coordination point for ATP. Mg(2+) is bound by residues N793 and D806. Position 817 is a phosphoserine (S817). Residue Y819 is modified to Phosphotyrosine; by autocatalysis. S887 is subject to Phosphoserine. A phosphotyrosine; by autocatalysis mark is found at Y896 and Y932. S955 is subject to Phosphoserine.

It belongs to the protein kinase superfamily. Tyr protein kinase family. CSF-1/PDGF receptor subfamily. As to quaternary structure, monomer in the absence of bound KITLG/SCF. Homodimer in the presence of bound KITLG/SCF, forming a heterotetramer with two KITLG/SCF molecules. Interacts (via phosphorylated tyrosine residues) with the adapter proteins GRB2 and GRB7 (via SH2 domain), and SH2B2/APS. Interacts (via C-terminus) with MPDZ (via the tenth PDZ domain). Interacts (via phosphorylated tyrosine residues) with PIK3R1 and PIK3 catalytic subunit. Interacts (via phosphorylated tyrosine) with CRK (isoform Crk-II), FYN, SHC1 and MATK/CHK (via SH2 domain). Interacts with LYN and FES/FPS. Interacts (via phosphorylated tyrosine residues) with the protein phosphatases PTPN6/SHP-1 (via SH2 domain), PTPN11/SHP-2 (via SH2 domain) and PTPRU. Interacts with PLCG1. Interacts with DOK1 and TEC. Interacts with IL1RAP (independent of stimulation with KITLG/SCF). A mast cell-specific KITLG/SCF-induced interleukin-33 signaling complex contains IL1RL1, IL1RAP, KIT and MYD88. In terms of processing, ubiquitinated by SOCS6. KIT is rapidly ubiquitinated after autophosphorylation induced by KITLG/SCF binding, leading to internalization and degradation. Post-translationally, autophosphorylated on tyrosine residues. KITLG/SCF binding promotes autophosphorylation. Phosphorylated tyrosine residues are important for interaction with specific binding partners.

It localises to the cell membrane. It catalyses the reaction L-tyrosyl-[protein] + ATP = O-phospho-L-tyrosyl-[protein] + ADP + H(+). With respect to regulation, present in an inactive conformation in the absence of bound ligand. KITLG/SCF binding leads to dimerization and activation by autophosphorylation on tyrosine residues. Activity is down-regulated by PRKCA-mediated phosphorylation on serine residues. In terms of biological role, tyrosine-protein kinase that acts as a cell-surface receptor for the cytokine KITLG/SCF and plays an essential role in the regulation of cell survival and proliferation, hematopoiesis, stem cell maintenance, gametogenesis, mast cell development, migration and function, and in melanogenesis. In response to KITLG/SCF binding, KIT can activate several signaling pathways. Phosphorylates PIK3R1, PLCG1, SH2B2/APS and CBL. Activates the AKT1 signaling pathway by phosphorylation of PIK3R1, the regulatory subunit of phosphatidylinositol 3-kinase. Activated KIT also transmits signals via GRB2 and activation of RAS, RAF1 and the MAP kinases MAPK1/ERK2 and/or MAPK3/ERK1. Promotes activation of STAT family members STAT1, STAT3, STAT5A and STAT5B. Activation of PLCG1 leads to the production of the cellular signaling molecules diacylglycerol and inositol 1,4,5-trisphosphate. KIT signaling is modulated by protein phosphatases, and by rapid internalization and degradation of the receptor. Activated KIT promotes phosphorylation of the protein phosphatases PTPN6/SHP-1 and PTPRU, and of the transcription factors STAT1, STAT3, STAT5A and STAT5B. Promotes phosphorylation of PIK3R1, CBL, CRK (isoform Crk-II), LYN, MAPK1/ERK2 and/or MAPK3/ERK1, PLCG1, SRC and SHC1. This chain is Mast/stem cell growth factor receptor Kit (KIT), found in Sus scrofa (Pig).